The following is a 250-amino-acid chain: Probable dihydroorotate dehydrogenase B (NAD(+)), electron transfer subunit (250 aa).

One can recognise an FAD-binding FR-type domain in the interval 1-89 (MINLKIEENV…RGPYGNGFDV (89 aa)). Residues C200, C205, C208, and C216 each contribute to the [2Fe-2S] cluster site.

The protein belongs to the PyrK family. As to quaternary structure, heterotetramer of 2 PyrK and 2 PyrD type B subunits. [2Fe-2S] cluster is required as a cofactor. FAD serves as cofactor.

It functions in the pathway pyrimidine metabolism; UMP biosynthesis via de novo pathway; orotate from (S)-dihydroorotate (NAD(+) route): step 1/1. Functionally, responsible for channeling the electrons from the oxidation of dihydroorotate from the FMN redox center in the PyrD type B subunit to the ultimate electron acceptor NAD(+). This chain is Probable dihydroorotate dehydrogenase B (NAD(+)), electron transfer subunit, found in Thermoplasma volcanium (strain ATCC 51530 / DSM 4299 / JCM 9571 / NBRC 15438 / GSS1).